The sequence spans 1272 residues: AF4/FMR2 family member 2 (1272 aa).

Disordered regions lie at residues 93–183 (IPKN…LTQD) and 200–223 (PQIGEVEESNPSAKEDSNPKSSGE). Residues 97-107 (SVPQNPNNKNE) are compositionally biased toward polar residues. Over residues 151 to 160 (SKPEWSRDSH) the composition is skewed to basic and acidic residues. Positions 161–183 (NPSTVLASQASGQPNKMQTLTQD) are enriched in polar residues. A compositionally biased stretch (basic and acidic residues) spans 212–223 (AKEDSNPKSSGE). Residue Ser391 is modified to Phosphoserine. Disordered stretches follow at residues 418–491 (KAKP…KWQL), 535–687 (TNAS…DQEE), 779–829 (SLHA…PEKK), and 842–903 (PPCI…QDKN). A compositionally biased stretch (pro residues) spans 426–438 (VNPPLATPQPPPA). Residues 439 to 452 (VQASGGSGSSSESE) show a composition bias toward low complexity. Thr478 carries the post-translational modification Phosphothreonine. Residues 543–558 (EPKERPLLSLIREKAR) show a composition bias toward basic and acidic residues. Residues 576–586 (STTSETVSQRT) show a composition bias toward polar residues. Residues 616 to 629 (PKEKESVELHDPPR) are compositionally biased toward basic and acidic residues. Residues 630-640 (GRNKATAHKPA) are compositionally biased toward basic residues. The span at 818–829 (PTEVAEKIPEKK) shows a compositional bias: basic and acidic residues. Composition is skewed to pro residues over residues 844–853 (CISPAPPHKP) and 874–883 (FPPPLSPLPE).

This sequence belongs to the AF4 family.

It is found in the nucleus speckle. Its function is as follows. RNA-binding protein. Might be involved in alternative splicing regulation through an interaction with G-quartet RNA structure. The chain is AF4/FMR2 family member 2 (AFF2) from Pongo pygmaeus (Bornean orangutan).